Here is a 158-residue protein sequence, read N- to C-terminus: Ribonuclease HI (158 aa).

Residues 3 to 144 (ELKLIHIFTD…CDQLARAAAE (142 aa)) enclose the RNase H type-1 domain. Residues Asp-12, Glu-50, Asp-72, and Asp-136 each contribute to the Mg(2+) site.

Belongs to the RNase H family. Monomer. It depends on Mg(2+) as a cofactor.

It is found in the cytoplasm. It carries out the reaction Endonucleolytic cleavage to 5'-phosphomonoester.. Endonuclease that specifically degrades the RNA of RNA-DNA hybrids. The chain is Ribonuclease HI from Shewanella oneidensis (strain ATCC 700550 / JCM 31522 / CIP 106686 / LMG 19005 / NCIMB 14063 / MR-1).